We begin with the raw amino-acid sequence, 331 residues long: Phosphate acyltransferase (331 aa).

This sequence belongs to the PlsX family. Homodimer. Probably interacts with PlsY.

The protein resides in the cytoplasm. It carries out the reaction a fatty acyl-[ACP] + phosphate = an acyl phosphate + holo-[ACP]. Its pathway is lipid metabolism; phospholipid metabolism. Catalyzes the reversible formation of acyl-phosphate (acyl-PO(4)) from acyl-[acyl-carrier-protein] (acyl-ACP). This enzyme utilizes acyl-ACP as fatty acyl donor, but not acyl-CoA. The protein is Phosphate acyltransferase of Lactococcus lactis subsp. lactis (strain IL1403) (Streptococcus lactis).